The chain runs to 324 residues: Alkanal monooxygenase beta chain (324 aa).

It belongs to the bacterial luciferase oxidoreductase family. As to quaternary structure, heterodimer of an alpha and a beta chain.

The enzyme catalyses a long-chain fatty aldehyde + FMNH2 + O2 = a long-chain fatty acid + hnu + FMN + H2O + 2 H(+). In terms of biological role, light-emitting reaction in luminous bacteria. The specific role of the beta subunit is unknown, but it is absolutely required for bioluminescence activity. The chain is Alkanal monooxygenase beta chain (luxB) from Photorhabdus luminescens (Xenorhabdus luminescens).